The primary structure comprises 520 residues: Laccase-4 (520 aa).

Positions 1 to 18 (MGRFSSLCALTAVIHSFG) are cleaved as a signal peptide. Plastocyanin-like domains lie at 24 to 149 (IGPV…MVVY), 161 to 303 (VDDE…ILRY), and 370 to 491 (TVPV…FSED). N-linked (GlcNAc...) asparagine glycosylation is found at N73 and N76. Positions 86, 88, 131, and 133 each coordinate Cu cation. Disulfide bonds link C107–C509 and C139–C227. N-linked (GlcNAc...) asparagine glycosylation is found at N239 and N399. Positions 418, 421, 423, 473, 474, 475, and 479 each coordinate Cu cation. N-linked (GlcNAc...) asparagine glycosylation occurs at N497.

Belongs to the multicopper oxidase family. Homodimer. It depends on Cu cation as a cofactor.

It localises to the secreted. It carries out the reaction 4 hydroquinone + O2 = 4 benzosemiquinone + 2 H2O. Its function is as follows. Lignin degradation and detoxification of lignin-derived products. This is Laccase-4 (LCC4) from Trametes villosa (White-rot fungus).